The primary structure comprises 723 residues: Solute carrier organic anion transporter family member 4A1 (723 aa).

At 1–102 the chain is on the cytoplasmic side; sequence MPQHAMGDTH…KCLQVFNTPK (102 aa). The segment at 23 to 64 is disordered; it reads SSATDSGCDTPPSSRASPASLRSAHGTLGSSSQPLFEPQAEK. Residues 33 to 46 show a composition bias toward low complexity; sequence PPSSRASPASLRSA. Phosphoserine is present on residues S39, S42, and S45. The chain crosses the membrane as a helical span at residues 103-123; sequence GFLFFLCAASFLQGMTVNGFI. Topologically, residues 124-142 are extracellular; sequence NTVITSIERRFDLHSYQSG. The chain crosses the membrane as a helical span at residues 143–163; that stretch reads LIASSYDIAACLCLTFVSYFG. The Cytoplasmic portion of the chain corresponds to 164-169; sequence GNGHKP. Residues 170-194 form a helical membrane-spanning segment; that stretch reads RWLGWGVLVLGIGSLVFALPHFTAG. The Extracellular segment spans residues 195–224; that stretch reads RYEVEMDEGLGTGTCLTNQSHVECKDSASG. N212 carries N-linked (GlcNAc...) asparagine glycosylation. The chain crosses the membrane as a helical span at residues 225–255; it reads LSNYRLIFMLGQLLHGVGATPLYTLGVTYLD. Residues 256–274 are Cytoplasmic-facing; the sequence is ENVKSSYSPIYIAIFYTAA. Residues 275 to 295 traverse the membrane as a helical segment; it reads ILGPAAGYLIGGAMLNVYTEV. The Extracellular segment spans residues 296 to 309; the sequence is GQRTELTTDSPLWV. Residues 310 to 334 form a helical membrane-spanning segment; the sequence is GAWWIGFLGTGIAAFLIAIPILGYP. Residues 335–380 lie on the Cytoplasmic side of the membrane; that stretch reads RQLPGSQRYVVMRAAETQQLKDHSRGAVSNPAFGKTVRDLPLSIWL. Residues 381 to 402 form a helical membrane-spanning segment; that stretch reads LLRNPTFILLCLAGATEATLIA. The Extracellular segment spans residues 403–422; the sequence is GMSTFGPKFFEAQFSLSASE. The helical transmembrane segment at 423 to 446 threads the bilayer; sequence AATLFGYLVVPAGGGGTLLGGFLV. Over 447–450 the chain is Cytoplasmic; the sequence is NKFK. The helical transmembrane segment at 451–473 threads the bilayer; the sequence is LRGSGIIRFCLFCTLTSLLAFFV. Residues 474 to 582 are Extracellular-facing; it reads FLMHCPNVHM…ASTCQSKPFL (109 aa). The 58-residue stretch at 500–557 folds into the Kazal-like domain; it reads LDLKAACNAIYCCQPKHYSPLCGSDGTMYYSPCYAGCPADAETDLGGQKVYRGCSCIL. Intrachain disulfides connect C506–C536 and C521–C555. N566 carries an N-linked (GlcNAc...) asparagine glycan. The helical transmembrane segment at 583 to 605 threads the bilayer; the sequence is LVLVFVVIIFTFLSSIPALTATL. Over 606 to 614 the chain is Cytoplasmic; the sequence is RCVSDRQRS. The chain crosses the membrane as a helical span at residues 615–640; it reads FALGIQWIVVRTLGSIPGPIAFGWVI. The Extracellular portion of the chain corresponds to 641–673; it reads DKACLLWQDQCGHQGSCFVYENEAMSRYMLIAG. Residues 674–691 traverse the membrane as a helical segment; sequence LTFKVLGFLFFVAAYFLY. Over 692–723 the chain is Cytoplasmic; the sequence is KSPSVSSDGLEASLPSQSSASDSPTEQLQSNV. A disordered region spans residues 700–723; sequence GLEASLPSQSSASDSPTEQLQSNV. Over residues 701-723 the composition is skewed to low complexity; the sequence is LEASLPSQSSASDSPTEQLQSNV.

This sequence belongs to the organo anion transporter (TC 2.A.60) family.

It is found in the cell membrane. It carries out the reaction 3,3',5-triiodo-L-thyronine(out) + L-glutamate(in) = 3,3',5-triiodo-L-thyronine(in) + L-glutamate(out). The catalysed reaction is L-thyroxine(out) + L-glutamate(in) = L-thyroxine(in) + L-glutamate(out). The enzyme catalyses estrone 3-sulfate(out) + L-glutamate(in) = estrone 3-sulfate(in) + L-glutamate(out). It catalyses the reaction taurocholate(out) + L-glutamate(in) = taurocholate(in) + L-glutamate(out). It carries out the reaction 3,3',5-triiodo-L-thyronine(out) = 3,3',5-triiodo-L-thyronine(in). The catalysed reaction is L-thyroxine(out) = L-thyroxine(in). The enzyme catalyses 3,3',5'-triiodo-L-thyronine(out) = 3,3',5'-triiodo-L-thyronine(in). It catalyses the reaction estrone 3-sulfate(out) = estrone 3-sulfate(in). It carries out the reaction 17beta-estradiol 17-O-(beta-D-glucuronate)(out) = 17beta-estradiol 17-O-(beta-D-glucuronate)(in). The catalysed reaction is taurocholate(out) = taurocholate(in). The enzyme catalyses prostaglandin E2(out) = prostaglandin E2(in). Its function is as follows. Organic anion antiporter with apparent broad substrate specificity. Recognizes various substrates including thyroid hormones 3,3',5-triiodo-L-thyronine (T3), L-thyroxine (T4) and 3,3',5'-triiodo-L-thyronine (rT3), conjugated steroids such as estrone 3-sulfate and estradiol 17-beta glucuronide, bile acids such as taurocholate and prostanoids such as prostaglandin E2, likely operating in a tissue-specific manner. May be involved in uptake of metabolites from the circulation into organs such as kidney, liver or placenta. Possibly drives the selective transport of thyroid hormones and estrogens coupled to an outward glutamate gradient across the microvillous membrane of the placenta. The transport mechanism, its electrogenicity and potential tissue-specific counterions remain to be elucidated. The protein is Solute carrier organic anion transporter family member 4A1 (Slco4a1) of Mus musculus (Mouse).